The sequence spans 294 residues: Glycine--tRNA ligase alpha subunit (294 aa).

Belongs to the class-II aminoacyl-tRNA synthetase family. As to quaternary structure, tetramer of two alpha and two beta subunits.

The protein localises to the cytoplasm. The catalysed reaction is tRNA(Gly) + glycine + ATP = glycyl-tRNA(Gly) + AMP + diphosphate. This Polynucleobacter asymbioticus (strain DSM 18221 / CIP 109841 / QLW-P1DMWA-1) (Polynucleobacter necessarius subsp. asymbioticus) protein is Glycine--tRNA ligase alpha subunit.